A 156-amino-acid chain; its full sequence is MGVSLLWALLQDMVLAAIPALGFAMVFNVPVRALRYCALLGAIGHGSRMLMIHFGMNIELASLVASIMIGVIGINWSRWLLAHPKVFTVAAVIPMFPGISAYTAMISVVEISHLGYSEALMSTMVTNFLKASFIVGALSIGLSLPGLWLYRKRPGV.

A run of 4 helical transmembrane segments spans residues 7–27 (WALL…AMVF), 54–74 (FGMN…VIGI), 86–106 (VFTV…TAMI), and 128–148 (FLKA…PGLW).

It belongs to the ThrE exporter (TC 2.A.79) family. In terms of assembly, the transporter is composed of YjjB and YjjP.

Its subcellular location is the cell inner membrane. Involved in succinate export with YjjP. Both proteins are required for export. This Yersinia pseudotuberculosis serotype I (strain IP32953) protein is Probable succinate transporter subunit YjjB.